The primary structure comprises 333 residues: Ketol-acid reductoisomerase (NADP(+)) (333 aa).

The KARI N-terminal Rossmann domain maps to 2–182 (ANIYYDDSCD…GGGRAGILET (181 aa)). NADP(+) contacts are provided by residues 25 to 28 (YGSQ), Arg-48, Ser-51, Ser-53, and 83 to 86 (DTIQ). The active site involves His-108. Position 134 (Gly-134) interacts with NADP(+). The region spanning 183–331 (SFREETETDL…TKLRSMMKWL (149 aa)) is the KARI C-terminal knotted domain. Residues Asp-191, Glu-195, Glu-227, and Glu-231 each coordinate Mg(2+). Position 252 (Ser-252) interacts with substrate.

It belongs to the ketol-acid reductoisomerase family. It depends on Mg(2+) as a cofactor.

The enzyme catalyses (2R)-2,3-dihydroxy-3-methylbutanoate + NADP(+) = (2S)-2-acetolactate + NADPH + H(+). The catalysed reaction is (2R,3R)-2,3-dihydroxy-3-methylpentanoate + NADP(+) = (S)-2-ethyl-2-hydroxy-3-oxobutanoate + NADPH + H(+). It participates in amino-acid biosynthesis; L-isoleucine biosynthesis; L-isoleucine from 2-oxobutanoate: step 2/4. The protein operates within amino-acid biosynthesis; L-valine biosynthesis; L-valine from pyruvate: step 2/4. Involved in the biosynthesis of branched-chain amino acids (BCAA). Catalyzes an alkyl-migration followed by a ketol-acid reduction of (S)-2-acetolactate (S2AL) to yield (R)-2,3-dihydroxy-isovalerate. In the isomerase reaction, S2AL is rearranged via a Mg-dependent methyl migration to produce 3-hydroxy-3-methyl-2-ketobutyrate (HMKB). In the reductase reaction, this 2-ketoacid undergoes a metal-dependent reduction by NADPH to yield (R)-2,3-dihydroxy-isovalerate. The chain is Ketol-acid reductoisomerase (NADP(+)) from Leptospira biflexa serovar Patoc (strain Patoc 1 / Ames).